The sequence spans 550 residues: Kinase suppressor of Ras B (550 aa).

Low complexity-rich tracts occupy residues S21–I56 and A63–S75. The segment at S21–I87 is disordered. The Phorbol-ester/DAG-type zinc finger occupies Y90–C145. The disordered stretch occupies residues T172 to G196. Low complexity predominate over residues S177–S193. Residues V248–V528 enclose the Protein kinase domain. The tract at residues M530 to F550 is disordered.

Belongs to the protein kinase superfamily. TKL Ser/Thr protein kinase family. Interacts with ndk-1.

In terms of biological role, probable inactive protein kinase which positively regulates Ras-mediated signaling probably acting at the level of let-60/ras or/and lin-45/raf. In the germline, regulates meiotic progression during oogenesis and mpk-1 (isoform b) phosphorylation. Plays a role in meiotic recombination events. Functions redundantly with ksr-1 in the Ras-mediated regulation of larval survival, the development of excretory canal, in determining vulval precursor cell fate during vulval induction and in mpk-1 phosphorylation in somatic cells. The chain is Kinase suppressor of Ras B from Caenorhabditis elegans.